Reading from the N-terminus, the 255-residue chain is ParA family protein CT_582 (255 aa).

It belongs to the ParA family.

This Chlamydia trachomatis serovar D (strain ATCC VR-885 / DSM 19411 / UW-3/Cx) protein is ParA family protein CT_582.